The chain runs to 243 residues: Biosynthetic peptidoglycan transglycosylase (243 aa).

Residues 21–43 (LLIVSLVSALMSVLQVIVFRFVD) traverse the membrane as a helical segment.

Belongs to the glycosyltransferase 51 family.

The protein resides in the cell inner membrane. The catalysed reaction is [GlcNAc-(1-&gt;4)-Mur2Ac(oyl-L-Ala-gamma-D-Glu-L-Lys-D-Ala-D-Ala)](n)-di-trans,octa-cis-undecaprenyl diphosphate + beta-D-GlcNAc-(1-&gt;4)-Mur2Ac(oyl-L-Ala-gamma-D-Glu-L-Lys-D-Ala-D-Ala)-di-trans,octa-cis-undecaprenyl diphosphate = [GlcNAc-(1-&gt;4)-Mur2Ac(oyl-L-Ala-gamma-D-Glu-L-Lys-D-Ala-D-Ala)](n+1)-di-trans,octa-cis-undecaprenyl diphosphate + di-trans,octa-cis-undecaprenyl diphosphate + H(+). Its pathway is cell wall biogenesis; peptidoglycan biosynthesis. Peptidoglycan polymerase that catalyzes glycan chain elongation from lipid-linked precursors. The sequence is that of Biosynthetic peptidoglycan transglycosylase from Xylella fastidiosa (strain Temecula1 / ATCC 700964).